A 224-amino-acid chain; its full sequence is Artemin (224 aa).

The signal sequence occupies residues 1-39 (MELGLAEPTALSHCLRPRWQSAWWPTLAVLALLSCVTEA). The propeptide occupies 40 to 111 (SLDPMSRSPA…AALRGARAAR (72 aa)). The disordered stretch occupies residues 43–124 (PMSRSPAARD…RSSRARTTDA (82 aa)). Residues 80–95 (RPPPQSPQPAPPPPGP) are compositionally biased toward pro residues. Residues 96–116 (ALQSPPAALRGARAARAGTRS) are compositionally biased toward low complexity. Cystine bridges form between Cys127/Cys192, Cys154/Cys220, and Cys158/Cys222. N-linked (GlcNAc...) asparagine glycosylation occurs at Asn206.

Belongs to the TGF-beta family. GDNF subfamily. As to quaternary structure, homodimer; disulfide-linked. Interacts with GFRA3 coreceptor and RET: forms a 2:2:2 ternary complex composed of ARTN ligand, GFRA3 and RET receptor.

It is found in the secreted. Its function is as follows. Growth factor that supports the survival of sensory and sympathetic peripheral neurons in culture and also supports the survival of dopaminergic neurons of the ventral mid-brain. Acts by binding to its coreceptor, GFRA3, leading to autophosphorylation and activation of the RET receptor. Strong attractant of gut hematopoietic cells thus promoting the formation Peyer's patch-like structures, a major component of the gut-associated lymphoid tissue. This Mus musculus (Mouse) protein is Artemin.